The primary structure comprises 172 residues: Shikimate kinase (172 aa).

Glycine 14–threonine 19 is an ATP binding site. Serine 18 serves as a coordination point for Mg(2+). Substrate contacts are provided by aspartate 36, arginine 60, and glycine 82. Arginine 120 is an ATP binding site. Arginine 140 contacts substrate. Glutamine 157 contacts ATP.

This sequence belongs to the shikimate kinase family. Monomer. Requires Mg(2+) as cofactor.

The protein resides in the cytoplasm. It carries out the reaction shikimate + ATP = 3-phosphoshikimate + ADP + H(+). It functions in the pathway metabolic intermediate biosynthesis; chorismate biosynthesis; chorismate from D-erythrose 4-phosphate and phosphoenolpyruvate: step 5/7. Its function is as follows. Catalyzes the specific phosphorylation of the 3-hydroxyl group of shikimic acid using ATP as a cosubstrate. The polypeptide is Shikimate kinase (Aeromonas salmonicida (strain A449)).